A 323-amino-acid chain; its full sequence is Mortality factor 4-like protein 1 (323 aa).

The Tudor-knot domain occupies 12-62 (QEGERVLCFHGPLLYEAKCVKVAIKDKQVKYFIHYSGWNKNWDEWVPESRV). The interval 77–143 (QKANQEQYAE…RKKRARVDPT (67 aa)) is disordered. Residues 94–227 (PGKKTSGLQQ…VAGIKEYFNV (134 aa)) form a sufficient for interaction with SIN3A region. An N6-acetyllysine modification is found at K104. The tract at residues 125–191 (STSETPQPPR…FYLPAKKNVD (67 aa)) is interaction with RB1-1. A sufficient for interaction with PHF12 region spans residues 149–303 (TFMNRVEVKV…FLKYLAKNSA (155 aa)). The MRG domain maps to 152 to 323 (NRVEVKVKIP…APPEYHRKAV (172 aa)). The interval 284–305 (LALLLNYLHDFLKYLAKNSATL) is interaction with RB1-2.

As to quaternary structure, component of the NuA4 histone acetyltransferase complex which contains the catalytic subunit KAT5/TIP60 and the subunits EP400, TRRAP/PAF400, BRD8/SMAP, EPC1, DMAP1/DNMAP1, RUVBL1/TIP49, RUVBL2, ING3, actin, ACTL6A/BAF53A, MORF4L1/MRG15, MORF4L2/MRGX, MRGBP, YEATS4/GAS41, VPS72/YL1 and MEAF6. The NuA4 complex interacts with MYC and the adenovirus E1A protein. MORF4L1 may also participate in the formation of NuA4 related complexes which lack the KAT5/TIP60 catalytic subunit, but which include the SWI/SNF related protein SRCAP. Component of the mSin3A histone deacetylase complex, which includes SIN3A, HDAC2, ARID4B, MORF4L1, RBBP4/RbAp48, and RBBP7/RbAp46. May also interact with PHF12 and one or more as yet undefined members of the TLE (transducin-like enhancer of split) family of transcriptional repressors. Component of the SIN3B complex, which includes SIN3B, HDAC2 or HDAC1, PHF12 and MORF4L1. Interacts with RB1 and KAT8. Interacts with the N-terminus of MRFAP1. Found in a complex composed of MORF4L1, MRFAP1 and RB1. Interacts with the entire BRCA complex, which contains BRCA1, PALB2, BRCA2 and RAD51. Interacts with PALB2. Forms a complex with MSL1 and NUPR1.

Its subcellular location is the nucleus. Functionally, component of the NuA4 histone acetyltransferase (HAT) complex which is involved in transcriptional activation of select genes principally by acetylation of nucleosomal histones H4 and H2A. This modification may both alter nucleosome - DNA interactions and promote interaction of the modified histones with other proteins which positively regulate transcription. This complex may be required for the activation of transcriptional programs associated with oncogene and proto-oncogene mediated growth induction, tumor suppressor mediated growth arrest and replicative senescence, apoptosis, and DNA repair. The NuA4 complex ATPase and helicase activities seem to be, at least in part, contributed by the association of RUVBL1 and RUVBL2 with EP400. NuA4 may also play a direct role in DNA repair when directly recruited to sites of DNA damage. As part of the SIN3B complex represses transcription and counteracts the histone acetyltransferase activity of EP300 through the recognition H3K27ac marks by PHF12 and the activity of the histone deacetylase HDAC2. SIN3B complex is recruited downstream of the constitutively active genes transcriptional start sites through interaction with histones and mitigates histone acetylation and RNA polymerase II progression within transcribed regions contributing to the regulation of transcription. Required for homologous recombination repair (HRR) and resistance to mitomycin C (MMC). Involved in the localization of PALB2, BRCA2 and RAD51, but not BRCA1, to DNA-damage foci. This is Mortality factor 4-like protein 1 (Morf4l1) from Rattus norvegicus (Rat).